A 509-amino-acid polypeptide reads, in one-letter code: Cobyric acid synthase (509 aa).

Residues 262–459 (EIKVGIIKLP…IHGIFENDSW (198 aa)) form the GATase cobBQ-type domain. Cys343 functions as the Nucleophile in the catalytic mechanism. His451 is an active-site residue.

Belongs to the CobB/CobQ family. CobQ subfamily.

It participates in cofactor biosynthesis; adenosylcobalamin biosynthesis. Catalyzes amidations at positions B, D, E, and G on adenosylcobyrinic A,C-diamide. NH(2) groups are provided by glutamine, and one molecule of ATP is hydrogenolyzed for each amidation. This Prochlorococcus marinus (strain MIT 9215) protein is Cobyric acid synthase.